The chain runs to 144 residues: Universal stress protein F (144 aa).

The protein belongs to the universal stress protein A family. Homodimer.

This Escherichia coli O157:H7 protein is Universal stress protein F (uspF).